A 116-amino-acid polypeptide reads, in one-letter code: Large ribosomal subunit protein eL18 (116 aa).

Belongs to the eukaryotic ribosomal protein eL18 family. As to quaternary structure, part of the 50S ribosomal subunit. Interacts weakly with proteins L4 and L15. Has been cross-linked to L4.

In terms of biological role, stabilizes the tertiary rRNA structure within the 23S rRNA domain (domain II) to which it binds. The chain is Large ribosomal subunit protein eL18 (rpl18e) from Haloarcula marismortui (strain ATCC 43049 / DSM 3752 / JCM 8966 / VKM B-1809) (Halobacterium marismortui).